The sequence spans 123 residues: Large ribosomal subunit protein bL12 (123 aa).

This sequence belongs to the bacterial ribosomal protein bL12 family. In terms of assembly, homodimer. Part of the ribosomal stalk of the 50S ribosomal subunit. Forms a multimeric L10(L12)X complex, where L10 forms an elongated spine to which 2 to 4 L12 dimers bind in a sequential fashion. Binds GTP-bound translation factors.

Forms part of the ribosomal stalk which helps the ribosome interact with GTP-bound translation factors. Is thus essential for accurate translation. This Neisseria meningitidis serogroup C (strain 053442) protein is Large ribosomal subunit protein bL12.